The following is a 259-amino-acid chain: UPF0246 protein PFLU_0992 (259 aa).

This sequence belongs to the UPF0246 family.

This Pseudomonas fluorescens (strain SBW25) protein is UPF0246 protein PFLU_0992.